The primary structure comprises 138 residues: Cysteine desulfuration protein SufE (138 aa).

The active-site Cysteine persulfide intermediate is Cys-51.

This sequence belongs to the SufE family. As to quaternary structure, homodimer. Interacts with SufS.

It localises to the cytoplasm. It functions in the pathway cofactor biosynthesis; iron-sulfur cluster biosynthesis. In terms of biological role, participates in cysteine desulfuration mediated by SufS. Cysteine desulfuration mobilizes sulfur from L-cysteine to yield L-alanine and constitutes an essential step in sulfur metabolism for biosynthesis of a variety of sulfur-containing biomolecules. Functions as a sulfur acceptor for SufS, by mediating the direct transfer of the sulfur atom from the S-sulfanylcysteine of SufS, an intermediate product of cysteine desulfuration process. This chain is Cysteine desulfuration protein SufE, found in Escherichia coli O81 (strain ED1a).